We begin with the raw amino-acid sequence, 123 residues long: WAP four-disulfide core domain protein 2 (123 aa).

Residues 1–28 (MPASRLVPLGAVLLLGLLLLLELPPVTG) form the signal peptide. 2 WAP domains span residues 30–71 (GADK…SAIC) and 74–122 (PNEK…VTPN). 8 disulfide bridges follow: Cys-37–Cys-63, Cys-46–Cys-67, Cys-50–Cys-62, Cys-56–Cys-71, Cys-81–Cys-109, Cys-92–Cys-113, Cys-96–Cys-108, and Cys-102–Cys-118. Asn-45 carries N-linked (GlcNAc...) asparagine glycosylation.

Homotrimer; disulfide-linked. In terms of tissue distribution, epididymis.

The protein localises to the secreted. Broad range protease inhibitor. This Oryctolagus cuniculus (Rabbit) protein is WAP four-disulfide core domain protein 2 (WFDC2).